A 214-amino-acid polypeptide reads, in one-letter code: Small ribosomal subunit protein eS1 (214 aa).

This sequence belongs to the eukaryotic ribosomal protein eS1 family.

The sequence is that of Small ribosomal subunit protein eS1 from Aeropyrum pernix (strain ATCC 700893 / DSM 11879 / JCM 9820 / NBRC 100138 / K1).